Consider the following 200-residue polypeptide: Small ribosomal subunit protein uS4 (200 aa).

The disordered stretch occupies residues 22-42 (TGKELEKRPYAPGPHGPGQRK). Residues 92–152 (SRLDNIVYRL…EKSQNLSVVK (61 aa)) form the S4 RNA-binding domain.

Belongs to the universal ribosomal protein uS4 family. In terms of assembly, part of the 30S ribosomal subunit. Contacts protein S5. The interaction surface between S4 and S5 is involved in control of translational fidelity.

One of the primary rRNA binding proteins, it binds directly to 16S rRNA where it nucleates assembly of the body of the 30S subunit. Functionally, with S5 and S12 plays an important role in translational accuracy. The chain is Small ribosomal subunit protein uS4 from Bacillus licheniformis (strain ATCC 14580 / DSM 13 / JCM 2505 / CCUG 7422 / NBRC 12200 / NCIMB 9375 / NCTC 10341 / NRRL NRS-1264 / Gibson 46).